The chain runs to 393 residues: Cysteine protease ATG4B (393 aa).

Cysteine 73 serves as the catalytic Nucleophile. Catalysis depends on residues aspartate 278 and histidine 280. Residues 388 to 391 carry the LIR motif; that stretch reads FEIL.

Belongs to the peptidase C54 family.

Its subcellular location is the cytoplasm. It is found in the cytosol. The protein resides in the cytoplasmic vesicle. It localises to the autophagosome. The protein localises to the endoplasmic reticulum. Its subcellular location is the mitochondrion. The enzyme catalyses [protein]-C-terminal L-amino acid-glycyl-phosphatidylethanolamide + H2O = [protein]-C-terminal L-amino acid-glycine + a 1,2-diacyl-sn-glycero-3-phosphoethanolamine. The catalysed reaction is [protein]-C-terminal L-amino acid-glycyl-phosphatidylserine + H2O = [protein]-C-terminal L-amino acid-glycine + a 1,2-diacyl-sn-glycero-3-phospho-L-serine. Cysteine protease that plays a key role in autophagy by mediating both proteolytic activation and delipidation of ATG8 family proteins. Required for canonical autophagy (macroautophagy), non-canonical autophagy as well as for mitophagy. The protease activity is required for proteolytic activation of ATG8 family proteins: cleaves the C-terminal amino acid of ATG8 proteins to reveal a C-terminal glycine. Exposure of the glycine at the C-terminus is essential for ATG8 proteins conjugation to phosphatidylethanolamine (PE) and insertion to membranes, which is necessary for autophagy. Protease activity is also required to counteract formation of high-molecular weight conjugates of ATG8 proteins (ATG8ylation): acts as a deubiquitinating-like enzyme that removes ATG8 conjugated to other proteins, such as ATG3. In addition to the protease activity, also mediates delipidation of ATG8 family proteins. Catalyzes delipidation of PE-conjugated forms of ATG8 proteins during macroautophagy. Also involved in non-canonical autophagy, a parallel pathway involving conjugation of ATG8 proteins to single membranes at endolysosomal compartments, by catalyzing delipidation of ATG8 proteins conjugated to phosphatidylserine (PS). The polypeptide is Cysteine protease ATG4B (Gallus gallus (Chicken)).